We begin with the raw amino-acid sequence, 293 residues long: ATP synthase gamma chain (293 aa).

This sequence belongs to the ATPase gamma chain family. F-type ATPases have 2 components, CF(1) - the catalytic core - and CF(0) - the membrane proton channel. CF(1) has five subunits: alpha(3), beta(3), gamma(1), delta(1), epsilon(1). CF(0) has three main subunits: a, b and c.

The protein resides in the cell inner membrane. In terms of biological role, produces ATP from ADP in the presence of a proton gradient across the membrane. The gamma chain is believed to be important in regulating ATPase activity and the flow of protons through the CF(0) complex. This Allorhizobium ampelinum (strain ATCC BAA-846 / DSM 112012 / S4) (Agrobacterium vitis (strain S4)) protein is ATP synthase gamma chain.